The following is a 95-amino-acid chain: MSYINIIEKSENSIELELVNDDHSLSNALKESLLSKKGVVIASYGVEHPVLHPETGRYISNPTLVLKTEGVLAEKVLKEALRDIIDLCSNCLEEL.

The protein belongs to the archaeal Rpo11/eukaryotic RPB11/RPC19 RNA polymerase subunit family. In terms of assembly, part of the RNA polymerase complex.

It localises to the cytoplasm. The enzyme catalyses RNA(n) + a ribonucleoside 5'-triphosphate = RNA(n+1) + diphosphate. Its function is as follows. DNA-dependent RNA polymerase (RNAP) catalyzes the transcription of DNA into RNA using the four ribonucleoside triphosphates as substrates. The protein is DNA-directed RNA polymerase subunit Rpo11 of Methanococcus vannielii (strain ATCC 35089 / DSM 1224 / JCM 13029 / OCM 148 / SB).